Consider the following 204-residue polypeptide: LexA repressor (204 aa).

A DNA-binding region (H-T-H motif) is located at residues 27–47; sequence VREIGEAVGLASSSTVHGHLA. Catalysis depends on for autocatalytic cleavage activity residues serine 126 and lysine 164.

The protein belongs to the peptidase S24 family. Homodimer.

The catalysed reaction is Hydrolysis of Ala-|-Gly bond in repressor LexA.. Functionally, represses a number of genes involved in the response to DNA damage (SOS response), including recA and lexA. In the presence of single-stranded DNA, RecA interacts with LexA causing an autocatalytic cleavage which disrupts the DNA-binding part of LexA, leading to derepression of the SOS regulon and eventually DNA repair. The sequence is that of LexA repressor from Listeria monocytogenes serotype 4b (strain CLIP80459).